Here is a 151-residue protein sequence, read N- to C-terminus: Monooxygenase nsrQ (151 aa).

The protein belongs to the avfA family.

The protein operates within secondary metabolite biosynthesis. Monooxygenase; part of the gene cluster that mediates the biosynthesis of the tetrahydroxanthone dimer neosartorin, which exhibits antibacterial activity. The two different monomeric units appear to be synthesized by the same set of enzymes, among which the Baeyer-Villiger monooxygenase nsrF is the key enzyme for the divergence of the biosynthetic routes. The pathway begins with the synthesis of atrochrysone thioester by the polyketide synthase nsrB. The atrochrysone carboxyl ACP thioesterase nsrC then breaks the thioester bond and releases the atrochrysone carboxylic acid from AacuL. Atrochrysone carboxylic acid is decarboxylated by the decarboxylase nsrE, and oxidized by the anthrone oxygenase nsrD to yield emodin. Emodin is then reduced to emodin hydroquinone by the oxidoreductase nsrR. A-ring reduction by the short chain dehydrogenase nsrJ, dehydration by the scytalone dehydratase-like protein nsrI and probable spontaneous re-oxidation, results in overall deoxygenation to chrysophanol. The Baeyer-Villiger monooxygenase nsrF accepts chrysophanol as a substrate to insert one oxygen atom at two different positions to yield the precursors of both monomric units. NsrF is promiscuous/flexible in interacting with the 2 (non methylated and methylated) aromatic rings of chrysophanol, thus diverging the biosynthetic pathway at this point. After the hydrolysis of the lactones, methylesterification by the methyltransferase nsrG yields respectively moniliphenone and 2,2',6'-trihydroxy-4-methyl-6-methoxya-cyldiphenylmethanone. The next steps are the hydroxylation by the FAD-dependent monooxygenase nsrK, followed by isomerization by the monooxygenase nsrQ. The short chain dehydrogenase/reductase nsrO then catalyzes the C-5 ketoreduction to give the xanthone skeleton of blennolide C and 5-acetylblennolide A. The acetyltransferase nsrL has a strict substrate specificity and uses only blennolide A but not blennolide C to yield 5-acetylblennolide A as the single-acetylated product. In the final step of the biosynthesis, the heterodimerization of the 2 xanthones, blennolide C and 5-acetylblennolide A, is catalyzed by the cytochrome P450 monooxygenase nsrP. NsrP can utilize at least three different xanthones as its substrates to perform the dimerization reaction. The polypeptide is Monooxygenase nsrQ (Aspergillus novofumigatus (strain IBT 16806)).